The primary structure comprises 332 residues: Ornithine carbamoyltransferase, catabolic (332 aa).

Carbamoyl phosphate is bound by residues 60–63 (STRT), Gln-87, Arg-111, and 138–141 (HPTQ). L-ornithine-binding positions include Asn-170, Asp-230, and 234–235 (SM). Residues 271–272 (CL) and Arg-316 each bind carbamoyl phosphate.

The protein belongs to the aspartate/ornithine carbamoyltransferase superfamily. OTCase family.

The protein resides in the cytoplasm. It carries out the reaction carbamoyl phosphate + L-ornithine = L-citrulline + phosphate + H(+). The protein operates within amino-acid degradation; L-arginine degradation via ADI pathway; carbamoyl phosphate from L-arginine: step 2/2. Reversibly catalyzes the transfer of the carbamoyl group from carbamoyl phosphate (CP) to the N(epsilon) atom of ornithine (ORN) to produce L-citrulline. The chain is Ornithine carbamoyltransferase, catabolic from Bacillus cereus (strain ATCC 10987 / NRS 248).